The primary structure comprises 137 residues: Small ribosomal subunit protein uS12 (137 aa).

The segment at 1-55 is disordered; that stretch reads MPTINQLVRKPRQSKIKKSDSPALNKGFNSKKKKFTDLNSPQKRGVCTRVGTMTP. Asp102 bears the 3-methylthioaspartic acid mark. The interval 118–137 is disordered; it reads SGVDGRRQGRSLYGTKKPKN.

This sequence belongs to the universal ribosomal protein uS12 family. Part of the 30S ribosomal subunit. Contacts proteins S8 and S17. May interact with IF1 in the 30S initiation complex.

In terms of biological role, with S4 and S5 plays an important role in translational accuracy. Interacts with and stabilizes bases of the 16S rRNA that are involved in tRNA selection in the A site and with the mRNA backbone. Located at the interface of the 30S and 50S subunits, it traverses the body of the 30S subunit contacting proteins on the other side and probably holding the rRNA structure together. The combined cluster of proteins S8, S12 and S17 appears to hold together the shoulder and platform of the 30S subunit. The polypeptide is Small ribosomal subunit protein uS12 (Staphylococcus aureus (strain Mu3 / ATCC 700698)).